We begin with the raw amino-acid sequence, 109 residues long: Large ribosomal subunit protein uL22 (109 aa).

The protein belongs to the universal ribosomal protein uL22 family. Part of the 50S ribosomal subunit.

In terms of biological role, this protein binds specifically to 23S rRNA; its binding is stimulated by other ribosomal proteins, e.g. L4, L17, and L20. It is important during the early stages of 50S assembly. It makes multiple contacts with different domains of the 23S rRNA in the assembled 50S subunit and ribosome. The globular domain of the protein is located near the polypeptide exit tunnel on the outside of the subunit, while an extended beta-hairpin is found that lines the wall of the exit tunnel in the center of the 70S ribosome. This chain is Large ribosomal subunit protein uL22, found in Polynucleobacter asymbioticus (strain DSM 18221 / CIP 109841 / QLW-P1DMWA-1) (Polynucleobacter necessarius subsp. asymbioticus).